Consider the following 236-residue polypeptide: Leucyl/phenylalanyl-tRNA--protein transferase (236 aa).

This sequence belongs to the L/F-transferase family.

It is found in the cytoplasm. The enzyme catalyses N-terminal L-lysyl-[protein] + L-leucyl-tRNA(Leu) = N-terminal L-leucyl-L-lysyl-[protein] + tRNA(Leu) + H(+). It catalyses the reaction N-terminal L-arginyl-[protein] + L-leucyl-tRNA(Leu) = N-terminal L-leucyl-L-arginyl-[protein] + tRNA(Leu) + H(+). The catalysed reaction is L-phenylalanyl-tRNA(Phe) + an N-terminal L-alpha-aminoacyl-[protein] = an N-terminal L-phenylalanyl-L-alpha-aminoacyl-[protein] + tRNA(Phe). Its function is as follows. Functions in the N-end rule pathway of protein degradation where it conjugates Leu, Phe and, less efficiently, Met from aminoacyl-tRNAs to the N-termini of proteins containing an N-terminal arginine or lysine. The sequence is that of Leucyl/phenylalanyl-tRNA--protein transferase from Idiomarina loihiensis (strain ATCC BAA-735 / DSM 15497 / L2-TR).